Consider the following 179-residue polypeptide: Acireductone dioxygenase (179 aa).

Fe(2+)-binding residues include His88, His90, Glu94, and His133. 4 residues coordinate Ni(2+): His88, His90, Glu94, and His133.

Belongs to the acireductone dioxygenase (ARD) family. As to quaternary structure, monomer. Interacts with MMP14. Fe(2+) serves as cofactor. It depends on Ni(2+) as a cofactor.

The protein resides in the cytoplasm. It is found in the nucleus. The protein localises to the cell membrane. It catalyses the reaction 1,2-dihydroxy-5-(methylsulfanyl)pent-1-en-3-one + O2 = 4-methylsulfanyl-2-oxobutanoate + formate + 2 H(+). The enzyme catalyses 1,2-dihydroxy-5-(methylsulfanyl)pent-1-en-3-one + O2 = 3-(methylsulfanyl)propanoate + CO + formate + 2 H(+). The protein operates within amino-acid biosynthesis; L-methionine biosynthesis via salvage pathway; L-methionine from S-methyl-5-thio-alpha-D-ribose 1-phosphate: step 5/6. Functionally, catalyzes 2 different reactions between oxygen and the acireductone 1,2-dihydroxy-3-keto-5-methylthiopentene (DHK-MTPene) depending upon the metal bound in the active site. Fe-containing acireductone dioxygenase (Fe-ARD) produces formate and 2-keto-4-methylthiobutyrate (KMTB), the alpha-ketoacid precursor of methionine in the methionine recycle pathway. Ni-containing acireductone dioxygenase (Ni-ARD) produces methylthiopropionate, carbon monoxide and formate, and does not lie on the methionine recycle pathway. This is Acireductone dioxygenase (adi1) from Xenopus laevis (African clawed frog).